We begin with the raw amino-acid sequence, 990 residues long: Pentatricopeptide repeat-containing protein At4g33170 (990 aa).

20 PPR repeats span residues 73–107 (ERFL…DLVS), 109–139 (NSIL…LRQD), 144–178 (SRMT…GLDG), 179–209 (DEFV…MPYR), 210–244 (DVVL…GLNP), 279–313 (EIIF…DVEC), 314–348 (DQVT…GLDL), 349–379 (MLTV…MSER), 380–414 (DLIS…GLKP), 415–450 (DQYT…NNVS), 451–477 (DSFV…LFER), 481–515 (DLVA…GERS), 516–550 (DDFT…GYDL), 551–581 (DLWV…IPVP), 582–616 (DDVA…GVLP), 617–651 (DEFT…NCTN), 652–682 (DPFV…IEMM), 683–717 (NITA…GIKP), 718–753 (DKVT…GIKP), and 754–788 (EIEH…ASAS). The type E motif stretch occupies residues 789 to 864 (MYRTLLAACR…DPGFSWIEVK (76 aa)). The tract at residues 865–895 (NKIHIFVVDDRSNRQTELIYRKVKDMIRDIK) is type E(+) motif. A type DYW motif region spans residues 896–990 (QEGYVPETDF…DGICSCGDYW (95 aa)).

This sequence belongs to the PPR family. PCMP-H subfamily.

The chain is Pentatricopeptide repeat-containing protein At4g33170 (PCMP-H53) from Arabidopsis thaliana (Mouse-ear cress).